The sequence spans 88 residues: U1-hexatoxin-Iw1d (88 aa).

A signal peptide spans 1-17 (LKFVVLICLVIMASTSA). Q18 carries the post-translational modification Pyrrolidone carboxylic acid. Cystine bridges form between C20–C31, C25–C39, C30–C65, C49–C73, and C67–C80. Residues 86–88 (RSE) constitute a propeptide that is removed on maturation.

This sequence belongs to the MIT-like AcTx family. Expressed by the venom gland.

The protein localises to the secreted. This chain is U1-hexatoxin-Iw1d, found in Illawarra wisharti (Illawarra funnel-web spider).